The chain runs to 617 residues: Ceramide transfer protein (617 aa).

Over residues 1–11 the composition is skewed to polar residues; the sequence is MSDNQSWNSSG. Residues 1–23 are disordered; it reads MSDNQSWNSSGSEEDLEPESGPP. Positions 23–117 constitute a PH domain; the sequence is PVERCGVLSK…WIDSIEQHKS (95 aa). A coiled-coil region spans residues 268–302; the sequence is REDSWQKRLDKEIEKRRRVEEAYKNAMTELKKKSH. Residues 320-326 carry the FFAT motif; it reads EFFDAVE. Residues 341–382 form a disordered region; the sequence is EKGRSHWPPSPPSSEAHTAAGSHRLVQAPPSCPPPTDLVSSS. Residues 383–611 form the START domain; that stretch reads DEHRFRIQVE…FTSYVQEKTA (229 aa). An N-acylsphing-4-enine contacts are provided by glutamate 466, glutamine 487, asparagine 524, and tyrosine 572.

It localises to the cytoplasm. The protein localises to the golgi apparatus. The protein resides in the endoplasmic reticulum. The enzyme catalyses N-hexadecanoylsphing-4-enine(in) = N-hexadecanoylsphing-4-enine(out). May mediate the intracellular trafficking of ceramide in a non-vesicular manner. In Xenopus laevis (African clawed frog), this protein is Ceramide transfer protein (cert1).